The chain runs to 115 residues: Large ribosomal subunit protein bL19 (115 aa).

The protein belongs to the bacterial ribosomal protein bL19 family.

This protein is located at the 30S-50S ribosomal subunit interface and may play a role in the structure and function of the aminoacyl-tRNA binding site. This Fervidobacterium nodosum (strain ATCC 35602 / DSM 5306 / Rt17-B1) protein is Large ribosomal subunit protein bL19.